Here is a 212-residue protein sequence, read N- to C-terminus: Fe/S biogenesis protein NfuA (212 aa).

Residues Cys169 and Cys172 each coordinate [4Fe-4S] cluster.

It belongs to the NfuA family. In terms of assembly, homodimer. [4Fe-4S] cluster is required as a cofactor.

Its function is as follows. Involved in iron-sulfur cluster biogenesis. Binds a 4Fe-4S cluster, can transfer this cluster to apoproteins, and thereby intervenes in the maturation of Fe/S proteins. Could also act as a scaffold/chaperone for damaged Fe/S proteins. In Acinetobacter baumannii (strain SDF), this protein is Fe/S biogenesis protein NfuA.